Reading from the N-terminus, the 487-residue chain is MDLYKLTVHELQDKLLAGEISSEDIVKSLFSRIALVEEKAQAFITLCEETALEGARRIDQQDEYGGIKGIPYGLKDLFCTRGIKTTCASRMLENFVPSYESTASKLLNEKGGILLGKLNLDEFAMGSSTEQSAFFPSRNPWDWERVPGGSSGGCAAAVAAGEIPFALASDTGGSIRQPASYCGIVGLKPTYGRVSRWGVAAFASSLDQVGILSRDVRDCALILKIIAGKDPLDATSADTEVPNYCAFLDGEVKGMRIAYPREYFQHWVTESIRTAVMKALRKFEELGAIVEEVSLPHSEYALPAYYIVAPAEASTNLARFDGVRYGLRDDEADNVIDMFSLSRAQGFGPEVKRRIMLGTYALSSGYYDAYYLKAMKVRRLIASDFAKVFRDFDLIVSPTTPTTAFKLGEQIDDTLTLYMNDALTVPVNMAGLPGISIPCALDDGLPVGMQLIGRAFDEATLLKAAYAFEQNTDYHRLTPVPGGGINE.

Active-site charge relay system residues include K75 and S150. S174 (acyl-ester intermediate) is an active-site residue.

This sequence belongs to the amidase family. GatA subfamily. In terms of assembly, heterotrimer of A, B and C subunits.

It carries out the reaction L-glutamyl-tRNA(Gln) + L-glutamine + ATP + H2O = L-glutaminyl-tRNA(Gln) + L-glutamate + ADP + phosphate + H(+). Functionally, allows the formation of correctly charged Gln-tRNA(Gln) through the transamidation of misacylated Glu-tRNA(Gln) in organisms which lack glutaminyl-tRNA synthetase. The reaction takes place in the presence of glutamine and ATP through an activated gamma-phospho-Glu-tRNA(Gln). The polypeptide is Glutamyl-tRNA(Gln) amidotransferase subunit A (Syntrophomonas wolfei subsp. wolfei (strain DSM 2245B / Goettingen)).